We begin with the raw amino-acid sequence, 666 residues long: ATP-dependent RNA helicase DDX51 (666 aa).

N-acetylalanine is present on Ala-2. The disordered stretch occupies residues 9-152 (YPGPDAAAAA…AAPDGPALEE (144 aa)). The segment covering 10 to 28 (PGPDAAAAAGPEGAEAGAH) has biased composition (low complexity). Positions 33 to 48 (ALLERLQSRARERQQQ) are enriched in basic and acidic residues. Low complexity predominate over residues 49–58 (REPAQTEAAA). A compositionally biased stretch (basic residues) spans 65–75 (RRRRRPRRRRR). 2 positions are modified to phosphoserine: Ser-83 and Ser-103. Over residues 97 to 108 (EDAGAESNEEAP) the composition is skewed to acidic residues. A Q motif motif is present at residues 221-229 (YFPVQAAVI). The 210-residue stretch at 243-452 (GRGGYRPSDL…QLGLHQPRLF (210 aa)) folds into the Helicase ATP-binding domain. 256–263 (APTGSGKT) lines the ATP pocket. The short motif at 371 to 374 (DEAD) is the DEAD box element. Residues 494 to 640 (VVLHLVLEMG…RHELSSKLLQ (147 aa)) enclose the Helicase C-terminal domain.

Belongs to the DEAD box helicase family. DDX51/DBP6 subfamily.

The protein resides in the nucleus. It localises to the nucleolus. The catalysed reaction is ATP + H2O = ADP + phosphate + H(+). Functionally, ATP-binding RNA helicase involved in the biogenesis of 60S ribosomal subunits. The polypeptide is ATP-dependent RNA helicase DDX51 (DDX51) (Homo sapiens (Human)).